The primary structure comprises 269 residues: 4-hydroxy-tetrahydrodipicolinate reductase (269 aa).

NAD(+)-binding positions include 9 to 14 (GAGGRM) and Glu-35. Arg-36 serves as a coordination point for NADP(+). NAD(+) is bound by residues 98 to 100 (GTT) and 122 to 125 (ASNY). The Proton donor/acceptor role is filled by His-155. A (S)-2,3,4,5-tetrahydrodipicolinate-binding site is contributed by His-156. Lys-159 functions as the Proton donor in the catalytic mechanism. 165–166 (GT) is a binding site for (S)-2,3,4,5-tetrahydrodipicolinate.

The protein belongs to the DapB family.

The protein resides in the cytoplasm. It carries out the reaction (S)-2,3,4,5-tetrahydrodipicolinate + NAD(+) + H2O = (2S,4S)-4-hydroxy-2,3,4,5-tetrahydrodipicolinate + NADH + H(+). It catalyses the reaction (S)-2,3,4,5-tetrahydrodipicolinate + NADP(+) + H2O = (2S,4S)-4-hydroxy-2,3,4,5-tetrahydrodipicolinate + NADPH + H(+). It functions in the pathway amino-acid biosynthesis; L-lysine biosynthesis via DAP pathway; (S)-tetrahydrodipicolinate from L-aspartate: step 4/4. Functionally, catalyzes the conversion of 4-hydroxy-tetrahydrodipicolinate (HTPA) to tetrahydrodipicolinate. In Actinobacillus pleuropneumoniae serotype 7 (strain AP76), this protein is 4-hydroxy-tetrahydrodipicolinate reductase.